Consider the following 586-residue polypeptide: Aspartate--tRNA(Asp/Asn) ligase (586 aa).

L-aspartate is bound at residue Glu172. The segment at 196–199 is aspartate; it reads QLYK. Arg218 contacts L-aspartate. Residues 218-220 and Gln227 each bind ATP; that span reads RDE. Position 446 (His446) interacts with L-aspartate. Glu480 serves as a coordination point for ATP. Arg487 lines the L-aspartate pocket. Residue 532–535 participates in ATP binding; sequence GIDR.

This sequence belongs to the class-II aminoacyl-tRNA synthetase family. Type 1 subfamily. In terms of assembly, homodimer.

Its subcellular location is the cytoplasm. The catalysed reaction is tRNA(Asx) + L-aspartate + ATP = L-aspartyl-tRNA(Asx) + AMP + diphosphate. Aspartyl-tRNA synthetase with relaxed tRNA specificity since it is able to aspartylate not only its cognate tRNA(Asp) but also tRNA(Asn). Reaction proceeds in two steps: L-aspartate is first activated by ATP to form Asp-AMP and then transferred to the acceptor end of tRNA(Asp/Asn). This Borreliella afzelii (strain PKo) (Borrelia afzelii) protein is Aspartate--tRNA(Asp/Asn) ligase.